The chain runs to 79 residues: Putative membrane protein insertion efficiency factor (79 aa).

This sequence belongs to the UPF0161 family.

It localises to the cell inner membrane. Could be involved in insertion of integral membrane proteins into the membrane. The protein is Putative membrane protein insertion efficiency factor of Prochlorococcus marinus (strain NATL2A).